The sequence spans 404 residues: MVKKVALLTAGGFAPCLSSAIAELIKRYTEVSPETTLIGYRYGYEGLLKGDSLEFSPAVRAHYDRLFSFGGSPIGNSRVKLTNVKDLVARGLVASGDDPLKVAADQLIADGVDVLHTIGGDDTNTTAADLAAYLAQHDYPLTVVGLPKTIDNDIVPIRQSLGAWTAADEGARFAANVIAEHNAAPRELIIHEIMGRNCGYLAAETSRRYVAWLDAQQWLPEAGLDRRGWDIHALYVPEATIDLDAEAERLRTVMDEVGSVNIFISEGAGVPDIVAQMQATGQEVPTDAFGHVQLDKINPGAWFAKQFAERIGAGKTMVQKSGYFSRSAKSNAQDLELIAATATMAVDAALAGTPGVVGQDEEAGDKLSVIDFKRIAGHKPFDITLDWYTQLLARIGQPAPIAAA.

A diphosphate-binding site is contributed by G12. Residue D121 participates in Mg(2+) binding. Substrate contacts are provided by residues 149–151 (TID), 194–196 (MGR), E266, and 323–326 (YFSR). The Proton acceptor role is filled by D151.

The protein belongs to the phosphofructokinase type A (PFKA) family. PPi-dependent PFK group II subfamily. Clade 'P' sub-subfamily. As to quaternary structure, homodimer. Mg(2+) is required as a cofactor.

The protein localises to the cytoplasm. It carries out the reaction beta-D-fructose 6-phosphate + diphosphate = beta-D-fructose 1,6-bisphosphate + phosphate + H(+). Its pathway is carbohydrate degradation; glycolysis; D-glyceraldehyde 3-phosphate and glycerone phosphate from D-glucose: step 3/4. With respect to regulation, non-allosteric. In terms of biological role, catalyzes the phosphorylation of D-fructose 6-phosphate, the first committing step of glycolysis. Uses inorganic phosphate (PPi) as phosphoryl donor instead of ATP like common ATP-dependent phosphofructokinases (ATP-PFKs), which renders the reaction reversible, and can thus function both in glycolysis and gluconeogenesis. Consistently, PPi-PFK can replace the enzymes of both the forward (ATP-PFK) and reverse (fructose-bisphosphatase (FBPase)) reactions. The chain is Pyrophosphate--fructose 6-phosphate 1-phosphotransferase from Propionibacterium freudenreichii subsp. shermanii (strain ATCC 9614 / DSM 4902 / CIP 103027 / NCIMB 8099 / CIRM-BIA1).